Here is a 281-residue protein sequence, read N- to C-terminus: Probable protein phosphatase 2C 9 (281 aa).

In terms of domain architecture, PPM-type phosphatase spans Lys-33 to Phe-280. The Mn(2+) site is built by Asp-70, Gly-71, Asp-232, and Asp-271.

Belongs to the PP2C family. In terms of assembly, interacts with phytochromes (via N-terminus). The cofactor is Mg(2+). Mn(2+) serves as cofactor.

It is found in the nucleus. It carries out the reaction O-phospho-L-seryl-[protein] + H2O = L-seryl-[protein] + phosphate. The catalysed reaction is O-phospho-L-threonyl-[protein] + H2O = L-threonyl-[protein] + phosphate. Involved in the regulation of phytochrome signaling. May regulate phytochrome-interacting factor 3 (PIF3) through the dephosphorylation of phytochrome. The chain is Probable protein phosphatase 2C 9 from Arabidopsis thaliana (Mouse-ear cress).